The primary structure comprises 72 residues: uncharacterized protein (72 aa).

Its subcellular location is the plastid. The protein resides in the chloroplast. This is an uncharacterized protein from Oenothera berteroana (Bertero's evening primrose).